Here is a 512-residue protein sequence, read N- to C-terminus: Glycerol-3-phosphate dehydrogenase (512 aa).

An FAD-binding site is contributed by 16 to 44 (DVAVVGGGINGVGIAADAAGRGLSVFLCE).

The protein belongs to the FAD-dependent glycerol-3-phosphate dehydrogenase family. Requires FAD as cofactor.

It localises to the cytoplasm. It carries out the reaction a quinone + sn-glycerol 3-phosphate = dihydroxyacetone phosphate + a quinol. The sequence is that of Glycerol-3-phosphate dehydrogenase (glpD) from Pseudomonas aeruginosa (strain ATCC 15692 / DSM 22644 / CIP 104116 / JCM 14847 / LMG 12228 / 1C / PRS 101 / PAO1).